Reading from the N-terminus, the 817-residue chain is Ribonuclease R 1 (817 aa).

An RNB domain is found at 259-584 (RVDYRNEITF…DLLVHRLIRE (326 aa)). One can recognise an S1 motif domain in the interval 637 to 717 (GEEYEGIIAS…MTGEIDFEYL (81 aa)). Positions 728-817 (AKAKKKPDHK…DGRKKPHKRG (90 aa)) are disordered. Over residues 729-742 (KAKKKPDHKGRKKS) the composition is skewed to basic residues. 2 stretches are compositionally biased toward basic and acidic residues: residues 767–777 (RRADEKFEFDK) and 795–810 (KFTD…TDGR).

Belongs to the RNR ribonuclease family. RNase R subfamily.

The protein localises to the cytoplasm. It catalyses the reaction Exonucleolytic cleavage in the 3'- to 5'-direction to yield nucleoside 5'-phosphates.. Functionally, 3'-5' exoribonuclease that releases 5'-nucleoside monophosphates and is involved in maturation of structured RNAs. The sequence is that of Ribonuclease R 1 (rnr1) from Lactococcus lactis subsp. lactis (strain IL1403) (Streptococcus lactis).